Here is a 78-residue protein sequence, read N- to C-terminus: Acyl carrier protein (78 aa).

The Carrier domain occupies 2-77 (STIEERVKKI…AAIDYIEAAN (76 aa)). At S37 the chain carries O-(pantetheine 4'-phosphoryl)serine.

This sequence belongs to the acyl carrier protein (ACP) family. Post-translationally, 4'-phosphopantetheine is transferred from CoA to a specific serine of apo-ACP by AcpS. This modification is essential for activity because fatty acids are bound in thioester linkage to the sulfhydryl of the prosthetic group.

It localises to the cytoplasm. Its pathway is lipid metabolism; fatty acid biosynthesis. Functionally, carrier of the growing fatty acid chain in fatty acid biosynthesis. This chain is Acyl carrier protein, found in Edwardsiella ictaluri (strain 93-146).